Consider the following 74-residue polypeptide: U19-theraphotoxin-Cg1a (74 aa).

An N-terminal signal peptide occupies residues 1–7 (IMFVWAS). Positions 8 to 36 (AAEVEERGSDQRDSPASLKSMETIFQSEQ) are excised as a propeptide. Disulfide bonds link Cys-39–Cys-53, Cys-46–Cys-58, and Cys-52–Cys-66.

Belongs to the neurotoxin 10 (Hwtx-1) family. 38 (Jztx-33) subfamily. As to expression, expressed by the venom gland.

The protein localises to the secreted. Its function is as follows. Probable ion channel inhibitor. In Chilobrachys guangxiensis (Chinese earth tiger tarantula), this protein is U19-theraphotoxin-Cg1a.